Here is a 335-residue protein sequence, read N- to C-terminus: Glucokinase (335 aa).

11–16 (ADIGGT) provides a ligand contact to ATP.

Belongs to the bacterial glucokinase family.

Its subcellular location is the cytoplasm. It carries out the reaction D-glucose + ATP = D-glucose 6-phosphate + ADP + H(+). The polypeptide is Glucokinase (Xanthomonas campestris pv. campestris (strain 8004)).